The following is a 498-amino-acid chain: Glycerol kinase (498 aa).

Thr11 serves as a coordination point for ADP. Positions 11, 12, and 13 each coordinate ATP. Thr11 is a binding site for sn-glycerol 3-phosphate. Arg15 is an ADP binding site. 4 residues coordinate sn-glycerol 3-phosphate: Arg81, Glu82, Tyr133, and Asp242. Glycerol contacts are provided by Arg81, Glu82, Tyr133, Asp242, and Gln243. Thr264 and Gly307 together coordinate ADP. Residues Thr264, Gly307, Gln311, and Gly412 each contribute to the ATP site. Residues Gly412 and Asn416 each coordinate ADP.

This sequence belongs to the FGGY kinase family.

The enzyme catalyses glycerol + ATP = sn-glycerol 3-phosphate + ADP + H(+). It participates in polyol metabolism; glycerol degradation via glycerol kinase pathway; sn-glycerol 3-phosphate from glycerol: step 1/1. Inhibited by fructose 1,6-bisphosphate (FBP). Functionally, key enzyme in the regulation of glycerol uptake and metabolism. Catalyzes the phosphorylation of glycerol to yield sn-glycerol 3-phosphate. The chain is Glycerol kinase from Delftia acidovorans (strain DSM 14801 / SPH-1).